Reading from the N-terminus, the 263-residue chain is MNRIDFKFKELKDQGKKALIPFITAGDPSLDTTVNIVLEMDKKGADIVEIGIPYSDPLADGPIIQGSSQRAIKGGAKIRNIMETVRKIRGKSEIPLVYMVYYSSIFKYGLERFIAEASAVGINGIIIPDLPIEERGDIMDITVKYEVHLIPLVAPTSKRRIQEIAAGGSGFVYCVSKNGVTGVGEKIKTDIKEYMELVGSYTELPKALGFGISGSSMAREFKPYCDGIIIGSAIIDIIYKCKGEKEILDKVGNFISEVKKSLE.

Residues E49 and D60 each act as proton acceptor in the active site.

The protein belongs to the TrpA family. As to quaternary structure, tetramer of two alpha and two beta chains.

The enzyme catalyses (1S,2R)-1-C-(indol-3-yl)glycerol 3-phosphate + L-serine = D-glyceraldehyde 3-phosphate + L-tryptophan + H2O. It functions in the pathway amino-acid biosynthesis; L-tryptophan biosynthesis; L-tryptophan from chorismate: step 5/5. In terms of biological role, the alpha subunit is responsible for the aldol cleavage of indoleglycerol phosphate to indole and glyceraldehyde 3-phosphate. The protein is Tryptophan synthase alpha chain of Clostridium kluyveri (strain NBRC 12016).